The chain runs to 396 residues: Phosphoglycerate kinase (396 aa).

Substrate-binding positions include 21 to 23 (DFN), Arg36, 59 to 62 (HLGK), Arg119, and Arg156. ATP contacts are provided by residues Lys206, Gly294, Glu325, and 352–355 (GGDS).

Belongs to the phosphoglycerate kinase family. In terms of assembly, monomer.

The protein localises to the cytoplasm. It catalyses the reaction (2R)-3-phosphoglycerate + ATP = (2R)-3-phospho-glyceroyl phosphate + ADP. It functions in the pathway carbohydrate degradation; glycolysis; pyruvate from D-glyceraldehyde 3-phosphate: step 2/5. The polypeptide is Phosphoglycerate kinase (Staphylococcus aureus (strain USA300)).